We begin with the raw amino-acid sequence, 290 residues long: Alpha-1,2-colitosyltransferase (290 aa).

This sequence belongs to the glycosyltransferase 11 family. It depends on Does not require a metal cofactor. as a cofactor.

It carries out the reaction GDP-beta-L-colitose + beta-D-galactosyl-(1-&gt;3)-N-acetyl-D-glucosamine = alpha-L-colitosyl-(1-&gt;2)-beta-D-galactosyl-(1-&gt;3)-N-acetyl-D-glucosamine + GDP + H(+). It functions in the pathway bacterial outer membrane biogenesis; LPS O-antigen biosynthesis. Addition of metal ions dramatically decreases the activity to 0-40%. In terms of biological role, involved in the biosynthesis of the lipopolysaccharide (LPS) O-antigen region. Catalyzes the transfer of colitose from GDP-colitose to the galactose residue of beta-Gal-(1-&gt;3)-GlcNAc (lacto-N-biose) via an alpha1,2-linkage. Is specific for beta-Gal-(1-&gt;3)-GlcNAc, but can use GDP-L-fucose as the sugar donor with almost the same efficiency as GDP-L-colitose. This chain is Alpha-1,2-colitosyltransferase, found in Escherichia coli.